A 418-amino-acid polypeptide reads, in one-letter code: Putative ion-transport protein YfeO (418 aa).

12 helical membrane passes run 10-30 (LLLS…LIVV), 54-74 (DSPL…GLVI), 99-119 (ALPG…SLGP), 120-140 (EHPI…RLLP), 149-169 (ILAS…AALI), 186-206 (LFAP…FFHP), 223-243 (ILSG…AVWC), 258-278 (VLVL…GGPV), 300-320 (DYFL…ASGF), 322-342 (GGRI…LHEH), 343-363 (VPAV…VLVV), and 371-391 (LFMA…CIVM).

This sequence belongs to the chloride channel (TC 2.A.49) family.

It localises to the cell membrane. The chain is Putative ion-transport protein YfeO from Shigella boydii serotype 18 (strain CDC 3083-94 / BS512).